The sequence spans 887 residues: Phosphatidylinositol 3-kinase catalytic subunit type 3 (887 aa).

In terms of domain architecture, C2 PI3K-type spans 35 to 184 (YKAVLEDPML…LAKLTKAHRQ (150 aa)). Residues 149–170 (VEADGSEPTRTPGRTSSTLSED) form a disordered region. Polar residues predominate over residues 156–170 (PTRTPGRTSSTLSED). Threonine 163 carries the post-translational modification Phosphothreonine; by AMPK. At serine 165 the chain carries Phosphoserine; by AMPK. Residues serine 244, serine 261, and serine 282 each carry the phosphoserine modification. The region spanning 283–520 (DHDLKPNATT…PKTHEMYLNV (238 aa)) is the PIK helical domain. Residues 416–467 (EPTKKDSQASVSESLSSSGVSSADIDSSQIITNPLPPVASPPPASKSKEVSD) are disordered. The segment covering 423–444 (QASVSESLSSSGVSSADIDSSQ) has biased composition (low complexity). The span at 449-459 (PLPPVASPPPA) shows a compositional bias: pro residues. Residues 605–871 (IPETATLFKS…LIDESVHALF (267 aa)) enclose the PI3K/PI4K catalytic domain. The tract at residues 611–617 (LFKSALM) is G-loop. A catalytic loop region spans residues 740-748 (GVGDRHLDN). The segment at 759 to 780 (HIDFGYILGRDPKPLPPPMKLN) is activation loop.

Belongs to the PI3/PI4-kinase family. In terms of assembly, component of the PI3K (PI3KC3/PI3K-III/class III phosphatidylinositol 3-kinase) complex the core of which is composed of the catalytic subunit PIK3C3, the regulatory subunit PIK3R4 and BECN1 associating with additional regulatory/auxiliary subunits to form alternative complex forms. Alternative complex forms containing a fourth regulatory subunit in a mutually exclusive manner are: the PI3K complex I (PI3KC3-C1) containing ATG14, and the PI3K complex II (PI3KC3-C2) containing UVRAG. PI3KC3-C1 displays a V-shaped architecture with PIK3R4 serving as a bridge between PIK3C3 and the ATG14:BECN1 subcomplex. Both, PI3KC3-C1 and PI3KC3-C2, can associate with further regulatory subunits such as RUBCN, SH3GLB1/Bif-1 and AMBRA1. PI3KC3-C1 probably associates with PIK3CB. Interacts with RAB7A in the presence of PIK3R4. Interacts with AMBRA1. Interacts with BECN1P1/BECN2. Interacts with SLAMF1. May interact with DYN2. May be a component of a complex composed of RAB5A (in GDP-bound form), DYN2 and PIK3C3. Interacts with NCKAP1L. Interacts with ATG14; this interaction is increased in the absence of TMEM39A. Interacts with STEEP1; the interaction is STING1-dependent and required for trafficking of STING1 from the endoplasmic reticulum. Interacts with YWHAG. Interacts with ARMC3. It depends on Mn(2+) as a cofactor. Ubiquitinated via 'Lys-29'- and 'Lys-48'-linked ubiquitination by UBE3C, promoting its degradation. Deubiquitination by ZRANB1/TRABID promotes its stabilization, leading to autophagosome maturation.

It is found in the midbody. Its subcellular location is the late endosome. The protein localises to the cytoplasmic vesicle. It localises to the autophagosome. It catalyses the reaction a 1,2-diacyl-sn-glycero-3-phospho-(1D-myo-inositol) + ATP = a 1,2-diacyl-sn-glycero-3-phospho-(1D-myo-inositol-3-phosphate) + ADP + H(+). Catalytic subunit of the PI3K complex that mediates formation of phosphatidylinositol 3-phosphate; different complex forms are believed to play a role in multiple membrane trafficking pathways: PI3KC3-C1 is involved in initiation of autophagosomes and PI3KC3-C2 in maturation of autophagosomes and endocytosis. As part of PI3KC3-C1, promotes endoplasmic reticulum membrane curvature formation prior to vesicle budding. Involved in regulation of degradative endocytic trafficking and required for the abscission step in cytokinesis, probably in the context of PI3KC3-C2. Involved in the transport of lysosomal enzyme precursors to lysosomes. Required for transport from early to late endosomes. The chain is Phosphatidylinositol 3-kinase catalytic subunit type 3 from Rattus norvegicus (Rat).